Reading from the N-terminus, the 386-residue chain is 8-amino-7-oxononanoate synthase (386 aa).

Position 23 (Arg23) interacts with substrate. 110-111 (GY) serves as a coordination point for pyridoxal 5'-phosphate. His135 is a substrate binding site. Residues Ser181, His209, and Thr236 each contribute to the pyridoxal 5'-phosphate site. Lys239 is modified (N6-(pyridoxal phosphate)lysine). A substrate-binding site is contributed by Thr354.

It belongs to the class-II pyridoxal-phosphate-dependent aminotransferase family. BioF subfamily. As to quaternary structure, homodimer. It depends on pyridoxal 5'-phosphate as a cofactor.

It catalyses the reaction 6-carboxyhexanoyl-[ACP] + L-alanine + H(+) = (8S)-8-amino-7-oxononanoate + holo-[ACP] + CO2. It functions in the pathway cofactor biosynthesis; biotin biosynthesis. In terms of biological role, catalyzes the decarboxylative condensation of pimeloyl-[acyl-carrier protein] and L-alanine to produce 8-amino-7-oxononanoate (AON), [acyl-carrier protein], and carbon dioxide. This Thiobacillus denitrificans (strain ATCC 25259 / T1) protein is 8-amino-7-oxononanoate synthase.